We begin with the raw amino-acid sequence, 133 residues long: Cytochrome b5 (133 aa).

The Cytochrome b5 heme-binding domain maps to 4 to 86 (EKEYILDEIS…LKNYLVGNFK (83 aa)). Positions 45 and 69 each coordinate heme. The chain crosses the membrane as a helical span at residues 108-128 (SGTGIMLIVLMALFAIAYGYY).

Belongs to the cytochrome b5 family. In terms of assembly, interacts with alternative squalene epoxidase PHATRDRAFT_45494.

The protein localises to the endoplasmic reticulum membrane. Functionally, hemoprotein that functions as an electron carrier for membrane bound monooxygenases involved in sterol biosynthesis. In Phaeodactylum tricornutum (strain CCAP 1055/1), this protein is Cytochrome b5.